The following is a 1318-amino-acid chain: Putative tetratricopeptide repeat protein 41 (1318 aa).

TPR repeat units follow at residues 399–432 (TQLE…KPCI), 653–684 (WVQE…TPVE), 817–850 (CRLM…LVQS), 858–891 (LKVQ…MLRL), 991–1027 (MEFL…KENA), and 1045–1082 (SDTL…RVIH).

The protein resides in the cytoplasm. This is Putative tetratricopeptide repeat protein 41 from Homo sapiens (Human).